A 113-amino-acid chain; its full sequence is Retrotransposon Gag-like protein 8A (113 aa).

This sequence belongs to the FAM127 family.

The polypeptide is Retrotransposon Gag-like protein 8A (Homo sapiens (Human)).